The primary structure comprises 191 residues: Cell division protein SepF (191 aa).

The segment covering 157 to 178 (YLNESPAQPVQTTTSFGRTATP) has biased composition (polar residues). Residues 157–191 (YLNESPAQPVQTTTSFGRTATPTPAWGTDSRYAAQ) form a disordered region.

The protein belongs to the SepF family. Homodimer. Interacts with FtsZ.

It is found in the cytoplasm. Cell division protein that is part of the divisome complex and is recruited early to the Z-ring. Probably stimulates Z-ring formation, perhaps through the cross-linking of FtsZ protofilaments. Its function overlaps with FtsA. This is Cell division protein SepF from Synechococcus elongatus (strain ATCC 33912 / PCC 7942 / FACHB-805) (Anacystis nidulans R2).